The sequence spans 138 residues: Protein NrdI (138 aa).

Belongs to the NrdI family.

In terms of biological role, probably involved in ribonucleotide reductase function. In Paracoccus denitrificans (strain Pd 1222), this protein is Protein NrdI.